Reading from the N-terminus, the 314-residue chain is Olfactory receptor 10A6 (314 aa).

Topologically, residues 1-25 (MERQNQSCVVEFILLGFSNYPELQG) are extracellular. N-linked (GlcNAc...) asparagine glycosylation is present at N5. A helical transmembrane segment spans residues 26-46 (QLFVAFLVIYLVTLIGNAIII). At 47–54 (VIVSLDQS) the chain is on the cytoplasmic side. Residues 55–75 (LHVPMYLFLLNLSVVDLSFSA) form a helical membrane-spanning segment. Topologically, residues 76-99 (VIMPEMLVVLSTEKTTISFGGCFA) are extracellular. C97 and C189 form a disulfide bridge. The chain crosses the membrane as a helical span at residues 100 to 120 (QMYFILLFGGAECFLLGAMAY). Over 121 to 139 (DRFAAICHPLNYQMIMNKG) the chain is Cytoplasmic. Residues 140 to 160 (VFMKLIIFSWALGFMLGTVQT) traverse the membrane as a helical segment. Over 161-197 (SWVSSFPFCGLNEINHISCETPAVLELACADTFLFEI) the chain is Extracellular. A helical transmembrane segment spans residues 198 to 217 (YAFTGTFLIILVPFLLILLS). The Cytoplasmic segment spans residues 218–237 (YIRVLFAILKMPSTTGRQKA). Residues 238 to 258 (FSTCAAHLTSVTLFYGTASMT) traverse the membrane as a helical segment. Residues 259–271 (YLQPKSGYSPETK) are Extracellular-facing. The chain crosses the membrane as a helical span at residues 272-292 (KVMSLSYSLLTPLLNLLIYSL). The Cytoplasmic portion of the chain corresponds to 293-314 (RNSEMKRALMKLWRRRVVLHTI).

Belongs to the G-protein coupled receptor 1 family.

The protein resides in the cell membrane. Its function is as follows. Odorant receptor. This Homo sapiens (Human) protein is Olfactory receptor 10A6 (OR10A6).